Reading from the N-terminus, the 381-residue chain is Beta-lactamase (381 aa).

An N-terminal signal peptide occupies residues 1–20; it reads MMKKSICCALLLTASFSTFA. Ser-84 serves as the catalytic Acyl-ester intermediate. Tyr-170 serves as the catalytic Proton acceptor. Residue 335–337 participates in substrate binding; the sequence is KTG.

Belongs to the class-C beta-lactamase family.

It localises to the periplasm. It catalyses the reaction a beta-lactam + H2O = a substituted beta-amino acid. Sulbactam is an effective progressive inhibitor but a poor competitive inhibitor. In terms of biological role, this protein is a serine beta-lactamase with a substrate specificity for cephalosporins. This Citrobacter freundii protein is Beta-lactamase (ampC).